A 1755-amino-acid polypeptide reads, in one-letter code: Transposon Ty1-PR1 Gag-Pol polyprotein (1755 aa).

Composition is skewed to polar residues over residues Met1–Ser23, Thr48–Ser60, Ser71–Gln93, and Gln127–Phe152. Disordered stretches follow at residues Met1 to Gln93, Pro126 to Pro173, and Gly352 to Thr421. The span at Thr153–Thr165 shows a compositional bias: low complexity. Residues Asn299–His401 are RNA-binding. Over residues Asn402–Ser418 the composition is skewed to low complexity. Ser416 is modified (phosphoserine). Residue Asp461 is the For protease activity; shared with dimeric partner of the active site. Residues Asn583–Cys640 are integrase-type zinc finger-like. The Integrase catalytic domain maps to Asn660–Pro835. Mg(2+) is bound by residues Asp671 and Asp736. 3 disordered regions span residues Ser956–Lys1087, Arg1092–Pro1111, and Asp1130–Thr1187. The segment covering Ser960–Thr969 has biased composition (low complexity). Polar residues predominate over residues Ser1005–Thr1015. Over residues Glu1038–Ser1053 the composition is skewed to basic and acidic residues. Composition is skewed to polar residues over residues Tyr1054–Asp1082 and Pro1101–Pro1111. Residues Lys1178–Arg1212 carry the Bipartite nuclear localization signal motif. The Reverse transcriptase Ty1/copia-type domain occupies Asn1338–Gln1476. Residues Asp1346, Asp1427, Asp1428, Asp1610, Glu1652, and Asp1685 each coordinate Mg(2+). Residues Asp1610–Lys1752 form the RNase H Ty1/copia-type domain.

As to quaternary structure, the capsid protein forms a homotrimer, from which the VLPs are assembled. The protease is a homodimer, whose active site consists of two apposed aspartic acid residues. Initially, virus-like particles (VLPs) are composed of the structural unprocessed proteins Gag and Gag-Pol, and also contain the host initiator methionine tRNA (tRNA(i)-Met) which serves as a primer for minus-strand DNA synthesis, and a dimer of genomic Ty RNA. Processing of the polyproteins occurs within the particle and proceeds by an ordered pathway, called maturation. First, the protease (PR) is released by autocatalytic cleavage of the Gag-Pol polyprotein yielding capsid protein p45 and a Pol-p154 precursor protein. This cleavage is a prerequisite for subsequent processing of Pol-p154 at the remaining sites to release the mature structural and catalytic proteins. Maturation takes place prior to the RT reaction and is required to produce transposition-competent VLPs.

It is found in the cytoplasm. It localises to the nucleus. The catalysed reaction is DNA(n) + a 2'-deoxyribonucleoside 5'-triphosphate = DNA(n+1) + diphosphate. It catalyses the reaction Endonucleolytic cleavage to 5'-phosphomonoester.. In terms of biological role, capsid protein (CA) is the structural component of the virus-like particle (VLP), forming the shell that encapsulates the retrotransposons dimeric RNA genome. The particles are assembled from trimer-clustered units and there are holes in the capsid shells that allow for the diffusion of macromolecules. CA also has nucleocapsid-like chaperone activity, promoting primer tRNA(i)-Met annealing to the multipartite primer-binding site (PBS), dimerization of Ty1 RNA and initiation of reverse transcription. The aspartyl protease (PR) mediates the proteolytic cleavages of the Gag and Gag-Pol polyproteins after assembly of the VLP. Functionally, reverse transcriptase/ribonuclease H (RT) is a multifunctional enzyme that catalyzes the conversion of the retro-elements RNA genome into dsDNA within the VLP. The enzyme displays a DNA polymerase activity that can copy either DNA or RNA templates, and a ribonuclease H (RNase H) activity that cleaves the RNA strand of RNA-DNA heteroduplexes during plus-strand synthesis and hydrolyzes RNA primers. The conversion leads to a linear dsDNA copy of the retrotransposon that includes long terminal repeats (LTRs) at both ends. Its function is as follows. Integrase (IN) targets the VLP to the nucleus, where a subparticle preintegration complex (PIC) containing at least integrase and the newly synthesized dsDNA copy of the retrotransposon must transit the nuclear membrane. Once in the nucleus, integrase performs the integration of the dsDNA into the host genome. This Saccharomyces cerevisiae (strain ATCC 204508 / S288c) (Baker's yeast) protein is Transposon Ty1-PR1 Gag-Pol polyprotein (TY1B-PR1).